We begin with the raw amino-acid sequence, 565 residues long: Amino-acid acetyltransferase, mitochondrial (565 aa).

Residues 38–58 (DIATATPAATPSDGAQPPAQN) form a disordered region. The N-acetyltransferase domain maps to 352–540 (LPVRVLRSME…EFGGGRLVRV (189 aa)).

This sequence belongs to the acetyltransferase family.

The protein localises to the mitochondrion. It catalyses the reaction L-glutamate + acetyl-CoA = N-acetyl-L-glutamate + CoA + H(+). The protein operates within amino-acid biosynthesis; L-arginine biosynthesis; N(2)-acetyl-L-ornithine from L-glutamate: step 1/4. In terms of biological role, N-acetylglutamate synthase involved in arginine biosynthesis. The polypeptide is Amino-acid acetyltransferase, mitochondrial (ARG2) (Cryptococcus neoformans var. neoformans serotype D (strain B-3501A) (Filobasidiella neoformans)).